A 124-amino-acid polypeptide reads, in one-letter code: Small ribosomal subunit protein uS12 (124 aa).

Residues 1–22 form a disordered region; it reads MATVNQLVRKPRKRKVAKSDVP. At Asp-89 the chain carries 3-methylthioaspartic acid. The segment at 99 to 124 is disordered; it reads RGSLDTSGVQNRKQGRSKYGTKRPKK. Residues 111-124 are compositionally biased toward basic residues; that stretch reads KQGRSKYGTKRPKK.

It belongs to the universal ribosomal protein uS12 family. As to quaternary structure, part of the 30S ribosomal subunit. Contacts proteins S8 and S17. May interact with IF1 in the 30S initiation complex.

With S4 and S5 plays an important role in translational accuracy. In terms of biological role, interacts with and stabilizes bases of the 16S rRNA that are involved in tRNA selection in the A site and with the mRNA backbone. Located at the interface of the 30S and 50S subunits, it traverses the body of the 30S subunit contacting proteins on the other side and probably holding the rRNA structure together. The combined cluster of proteins S8, S12 and S17 appears to hold together the shoulder and platform of the 30S subunit. In Marinomonas sp. (strain MWYL1), this protein is Small ribosomal subunit protein uS12.